Reading from the N-terminus, the 125-residue chain is Protein ApaG (125 aa).

The 123-residue stretch at Thr3–Asn125 folds into the ApaG domain.

This Anaeromyxobacter dehalogenans (strain 2CP-C) protein is Protein ApaG.